A 104-amino-acid chain; its full sequence is Thioredoxin (104 aa).

The Thioredoxin domain maps to 2 to 104; that stretch reads AIVKVTDSNF…NLAEVLDKHL (103 aa). Residues C29 and C32 are joined by a disulfide bond.

It belongs to the thioredoxin family.

Component of the thioredoxin-thioredoxin reductase system. Participates in various redox reactions through the reversible oxidation of its active center dithiol to a disulfide and catalyzes dithiol-disulfide exchange reactions. In Staphylococcus haemolyticus (strain JCSC1435), this protein is Thioredoxin (trxA).